A 241-amino-acid chain; its full sequence is Uracil-DNA glycosylase (241 aa).

D68 serves as the catalytic Proton acceptor.

Belongs to the uracil-DNA glycosylase (UDG) superfamily. UNG family.

It localises to the cytoplasm. The catalysed reaction is Hydrolyzes single-stranded DNA or mismatched double-stranded DNA and polynucleotides, releasing free uracil.. Functionally, excises uracil residues from the DNA which can arise as a result of misincorporation of dUMP residues by DNA polymerase or due to deamination of cytosine. This is Uracil-DNA glycosylase from Rhizobium meliloti (strain 1021) (Ensifer meliloti).